Reading from the N-terminus, the 125-residue chain is uncharacterized protein (125 aa).

It localises to the plastid. This is an uncharacterized protein from Euglena longa (Euglenophycean alga).